A 1028-amino-acid polypeptide reads, in one-letter code: Ubiquitin conjugation factor E4 A (1028 aa).

Residues 33–57 form a disordered region; it reads KEQLKQQSDELPASPDDSDNSVSES. K386 carries the N6-acetyllysine modification. Residues 949–1023 form the U-box domain; sequence DACDEFLDPI…QRWLAERKQQ (75 aa).

This sequence belongs to the ubiquitin conjugation factor E4 family. In terms of tissue distribution, expressed in liver, heart, brain, kidney and testis.

It is found in the cytoplasm. It catalyses the reaction S-ubiquitinyl-[E2 ubiquitin-conjugating enzyme]-L-cysteine + [acceptor protein]-L-lysine = [E2 ubiquitin-conjugating enzyme]-L-cysteine + N(6)-ubiquitinyl-[acceptor protein]-L-lysine.. It participates in protein modification; protein ubiquitination. Ubiquitin-protein ligase that probably functions as an E3 ligase in conjunction with specific E1 and E2 ligases. May also function as an E4 ligase mediating the assembly of polyubiquitin chains on substrates ubiquitinated by another E3 ubiquitin ligase. Mediates 'Lys-48'-linked polyubiquitination of substrates. The chain is Ubiquitin conjugation factor E4 A from Mus musculus (Mouse).